A 159-amino-acid chain; its full sequence is Phosphopantetheine adenylyltransferase (159 aa).

A substrate-binding site is contributed by T10. ATP contacts are provided by residues 10–11 (TF) and H18. Substrate contacts are provided by K42, L73, and R87. ATP-binding positions include 88-90 (GLR), E98, and 123-129 (YSYVSGT).

The protein belongs to the bacterial CoaD family. Homohexamer. Mg(2+) serves as cofactor.

It is found in the cytoplasm. It catalyses the reaction (R)-4'-phosphopantetheine + ATP + H(+) = 3'-dephospho-CoA + diphosphate. It participates in cofactor biosynthesis; coenzyme A biosynthesis; CoA from (R)-pantothenate: step 4/5. Functionally, reversibly transfers an adenylyl group from ATP to 4'-phosphopantetheine, yielding dephospho-CoA (dPCoA) and pyrophosphate. This Coxiella burnetii (strain CbuK_Q154) (Coxiella burnetii (strain Q154)) protein is Phosphopantetheine adenylyltransferase.